We begin with the raw amino-acid sequence, 691 residues long: Germ cell nuclear acidic protein (691 aa).

The SUMO interaction motif 1 (SIM) signature appears at 22-25 (ILNV). Residues 25 to 488 (VQSSSDDTSG…GAAKVEKRKT (464 aa)) are disordered. Positions 27-36 (SSSDDTSGSS) are enriched in low complexity. Residues 48-63 (CILNVQSRSGDTSGSS) are compositionally biased toward polar residues. Short sequence motifs (SUMO interaction motif 1 (SIM)) lie at residues 76–79 (VVVI), 97–100 (LLEI), and 121–124 (IVIS). Residues 86–97 (ECHTHEEKKAKL) show a composition bias toward basic and acidic residues. Residues 124–333 (SDDDNDDDNG…VPDDNSDDLE (210 aa)) are compositionally biased toward acidic residues. Over residues 467-488 (GHKKRGPSKKKPGAAKVEKRKT) the composition is skewed to basic residues. The SprT-like domain maps to 522–677 (VQRIYDLFNR…AKCKGSLVMV (156 aa)).

It belongs to the serine-aspartate repeat-containing protein (SDr) family. As to quaternary structure, interacts (via SIM domains) with SUMO2; this interaction allows the GCNA recruitment to DPCs sites. Interacts with TOP2A; this interaction allows the resolution of topoisomerase II (TOP2A) DNA-protein cross-links. Expressed in germ cells of the testis (at protein level). Detected in skeletal muscle, liver, kidney, pancreas, heart, lung and brain. Expressed throughout spermatogenesis, from spermatogonia to elongated spermatids, in normal adult testis (at protein level).

It localises to the nucleus. Its subcellular location is the PML body. The protein resides in the chromosome. Its function is as follows. May play a role in DNA-protein cross-links (DPCs) clearance through a SUMO-dependent recruitment to sites of DPCs, ensuring the genomic stability by protecting germ cells and early embryos from various sources of damage. Can resolve the topoisomerase II (TOP2A) DPCs. The chain is Germ cell nuclear acidic protein from Homo sapiens (Human).